The primary structure comprises 280 residues: Equatorin (280 aa).

The first 19 residues, 1–19, serve as a signal peptide directing secretion; the sequence is MDFILLIFLSGVFLPNIFS. Topologically, residues 20 to 183 are vesicular; it reads LQPTVEQDPG…LSELEEIKLK (164 aa). The segment at 112-131 is disordered; it reads ATASGEEDKRSEPSRKSSTP. The span at 117–126 shows a compositional bias: basic and acidic residues; the sequence is EEDKRSEPSR. Asn145 is a glycosylation site (N-linked (GlcNAc...) asparagine). The helical transmembrane segment at 184-204 threads the bilayer; that stretch reads LMLGISLMTLILLIPLLIFCF. Residues 205-280 are Cytoplasmic-facing; it reads ATLYKLRHLR…AEVTEERISE (76 aa). Ser279 carries the phosphoserine modification.

In terms of assembly, interacts with SNAP25. Highly N- and O-glycosylated; contains sialic acid. In terms of tissue distribution, highly expressed in testis and epididymis. Low expression in other tissues.

It localises to the cytoplasmic vesicle. The protein localises to the secretory vesicle. It is found in the acrosome membrane. Its subcellular location is the acrosome inner membrane. The protein resides in the acrosome outer membrane. In terms of biological role, acrosomal membrane-anchored protein involved in the process of fertilization and in acrosome biogenesis. This is Equatorin (Eqtn) from Rattus norvegicus (Rat).